We begin with the raw amino-acid sequence, 152 residues long: Flagellar assembly factor FliW (152 aa).

The protein belongs to the FliW family. In terms of assembly, interacts with translational regulator CsrA and flagellin(s).

It localises to the cytoplasm. Acts as an anti-CsrA protein, binds CsrA and prevents it from repressing translation of its target genes, one of which is flagellin. Binds to flagellin and participates in the assembly of the flagellum. This is Flagellar assembly factor FliW from Desulfitobacterium hafniense (strain Y51).